The chain runs to 505 residues: Maturase K (505 aa).

This sequence belongs to the intron maturase 2 family. MatK subfamily.

It localises to the plastid. The protein resides in the chloroplast. In terms of biological role, usually encoded in the trnK tRNA gene intron. Probably assists in splicing its own and other chloroplast group II introns. The sequence is that of Maturase K from Dioon edule (Virgin's palm).